The following is a 1399-amino-acid chain: DNA-directed RNA polymerase subunit beta' (1399 aa).

Positions 70, 72, 85, and 88 each coordinate Zn(2+). Asp-460, Asp-462, and Asp-464 together coordinate Mg(2+). Residues Cys-814, Cys-888, Cys-895, and Cys-898 each coordinate Zn(2+). Positions 1367–1399 (SERKRQRDLGKPQRVSASEAEAALTEALNSSGN) are disordered. Residues 1382-1399 (SASEAEAALTEALNSSGN) show a composition bias toward low complexity.

This sequence belongs to the RNA polymerase beta' chain family. As to quaternary structure, the RNAP catalytic core consists of 2 alpha, 1 beta, 1 beta' and 1 omega subunit. When a sigma factor is associated with the core the holoenzyme is formed, which can initiate transcription. It depends on Mg(2+) as a cofactor. Requires Zn(2+) as cofactor.

The enzyme catalyses RNA(n) + a ribonucleoside 5'-triphosphate = RNA(n+1) + diphosphate. In terms of biological role, DNA-dependent RNA polymerase catalyzes the transcription of DNA into RNA using the four ribonucleoside triphosphates as substrates. The polypeptide is DNA-directed RNA polymerase subunit beta' (Pseudomonas aeruginosa (strain UCBPP-PA14)).